A 142-amino-acid chain; its full sequence is Hemoglobin subunit alpha (142 aa).

The 141-residue stretch at 2 to 142 (VLSGEDKSNI…VSTVLTSKYR (141 aa)) folds into the Globin domain. Phosphoserine is present on Ser-4. Lys-8 and Lys-12 each carry N6-succinyllysine. Lys-17 is subject to N6-acetyllysine; alternate. The residue at position 17 (Lys-17) is an N6-succinyllysine; alternate. At Tyr-25 the chain carries Phosphotyrosine. Residue Ser-36 is modified to Phosphoserine. Residue Lys-41 is modified to N6-succinyllysine. Ser-50 carries the phosphoserine modification. His-59 is a binding site for O2. Residue His-88 coordinates heme b. Ser-103 bears the Phosphoserine mark. Phosphothreonine is present on Thr-109. Residues Ser-112, Ser-125, and Ser-132 each carry the phosphoserine modification. Residues Thr-135 and Thr-138 each carry the phosphothreonine modification. Ser-139 carries the post-translational modification Phosphoserine.

This sequence belongs to the globin family. In terms of assembly, heterotetramer of two alpha chains and two beta chains. In terms of tissue distribution, red blood cells.

In terms of biological role, involved in oxygen transport from the lung to the various peripheral tissues. Hemopressin acts as an antagonist peptide of the cannabinoid receptor CNR1. Hemopressin-binding efficiently blocks cannabinoid receptor CNR1 and subsequent signaling. The sequence is that of Hemoglobin subunit alpha (Hba) from Mus musculus (Mouse).